Here is a 370-residue protein sequence, read N- to C-terminus: Dihydroorotate dehydrogenase (quinone) (370 aa).

FMN contacts are provided by residues 80–84 (AGFDK) and T104. K84 contacts substrate. Position 129–133 (129–133 (NRMGF)) interacts with substrate. Residues N157 and N190 each contribute to the FMN site. N190 lines the substrate pocket. S193 serves as the catalytic Nucleophile. N195 contacts substrate. Positions 226 and 254 each coordinate FMN. 255 to 256 (NT) is a binding site for substrate. FMN-binding positions include G278, G307, and 328–329 (YT).

It belongs to the dihydroorotate dehydrogenase family. Type 2 subfamily. Monomer. The cofactor is FMN.

The protein resides in the cell membrane. The catalysed reaction is (S)-dihydroorotate + a quinone = orotate + a quinol. It participates in pyrimidine metabolism; UMP biosynthesis via de novo pathway; orotate from (S)-dihydroorotate (quinone route): step 1/1. In terms of biological role, catalyzes the conversion of dihydroorotate to orotate with quinone as electron acceptor. The sequence is that of Dihydroorotate dehydrogenase (quinone) from Mycolicibacterium paratuberculosis (strain ATCC BAA-968 / K-10) (Mycobacterium paratuberculosis).